The primary structure comprises 502 residues: Mannitol 2-dehydrogenase (502 aa).

Position 37–48 (37–48) interacts with NAD(+); the sequence is IVHVGVGGFHRA.

The protein belongs to the mannitol dehydrogenase family. As to quaternary structure, monomer.

The enzyme catalyses D-mannitol + NAD(+) = D-fructose + NADH + H(+). Its function is as follows. Catalyzes the NAD(H)-dependent interconversion of D-fructose and D-mannitol in the mannitol metabolic pathway. The polypeptide is Mannitol 2-dehydrogenase (Aspergillus terreus (strain NIH 2624 / FGSC A1156)).